A 307-amino-acid chain; its full sequence is Protein ORANGE, chloroplastic (307 aa).

The transit peptide at 1 to 55 (MSSLGRILSVSYPPDPYTWRFSQYKLSSSLGRNRRLRWRFTALDPESSSLDSESS) directs the protein to the chloroplast. Lysine 58 participates in a covalent cross-link: Glycyl lysine isopeptide (Lys-Gly) (interchain with G-Cter in ubiquitin). 2 consecutive transmembrane segments (helical) span residues 146–166 (VYYA…GLLA) and 199–219 (IVAS…VVEV). The interval 208–299 (VGVISALMVV…CTGMAMASEH (92 aa)) is CR-type-like. Residues 230–237 (CKYCLGTG) form a CXXCXGXG motif repeat. Residues 241–248 (CARCSSTG) form a CXXCXXXG motif repeat. Residues 274 to 281 (CSNCSGAG) form a CXXCXGXG motif repeat. One copy of the CXXCXXXG motif repeat lies at 285 to 292 (CPTCLCTG).

Belongs to the orange-like family. As to quaternary structure, interacts with the phytoene synthase PSY1 in chloroplast. Binds to the eukaryotic release factor eRF1-2. Interacts with the transcription factor TCP14 in the nucleus to repress chloroplast biogenesis in etiolated seedlings. Associates to the E2 ubiquitin-conjugating enzyme UBC19. In terms of processing, ubiquitination at K-58 by UBC19 is essential for nuclear localization.

It localises to the plastid. The protein localises to the chloroplast membrane. The protein resides in the nucleus. It is found in the cytoplasm. Functionally, involved in chromoplast differentiation. Associated with a cellular process that triggers the differentiation of pro-plastids or other non-colored plastids into chromoplasts for carotenoid accumulation. Is associated with carotenoid accumulation in chromoplasts. Functions as a major regulator of the phytoene synthase PSY1 protein level and activity. Modulates carotenoid biosynthesis by means of post-transcriptional regulation of PSY1. Modulates carotenoid biosynthesis in part by up-regulating a series of endogenous carotenogenic genes. Regulates cell elongation in the petiole in an eRF1-2-dependent manner. Binds to and represses TCP14 transactivation activity, thus preventing early light-induced proteins (ELIPs, e.g. ELIP1 and ELIP2) expression and delaying chloroplast biogenesis (e.g. lower chlorophyll biosynthesis and slower development of thylakoid membranes) in germinating cotyledons and etiolated seedlings; reduced levels upon illumination combined to TCP14 accumulation derepress chloroplast biogenesis during deetiolation. The polypeptide is Protein ORANGE, chloroplastic (Arabidopsis thaliana (Mouse-ear cress)).